We begin with the raw amino-acid sequence, 459 residues long: ATP-binding protein Uup-like (459 aa).

The ABC transporter domain occupies 132–350; that stretch reads FEMEDVSYEI…QQANFWASKA (219 aa). 164–171 contacts ATP; the sequence is GPNGCGKT. Residues 357-375 show a composition bias toward basic and acidic residues; that stretch reads AKKSEPLKEESAVKNDRTS. The disordered stretch occupies residues 357–381; it reads AKKSEPLKEESAVKNDRTSKPKSVK.

The protein belongs to the ABC transporter superfamily. ABCF family. Uup subfamily.

It localises to the cytoplasm. It catalyses the reaction ATP + H2O = ADP + phosphate + H(+). Its function is as follows. Might play a role in ribosome assembly or function; this is missing the first ABC transporter domain compared to paralogs. The protein is ATP-binding protein Uup-like (uup-B) of Haemophilus influenzae (strain ATCC 51907 / DSM 11121 / KW20 / Rd).